The primary structure comprises 252 residues: Beta-crystallin B1 (252 aa).

Composition is skewed to low complexity over residues 1 to 15 and 24 to 37; these read MSQAAKASASATVAV and KGAPPAGTSPSPGT. Residues 1-42 are disordered; the sequence is MSQAAKASASATVAVNPGPDTKGKGAPPAGTSPSPGTTLAPT. Serine 2 is subject to N-acetylserine. Residues 2–58 are N-terminal arm; sequence SQAAKASASATVAVNPGPDTKGKGAPPAGTSPSPGTTLAPTTVPITSAKAAELPPGN. 2 consecutive Beta/gamma crystallin 'Greek key' domains span residues 59-98 and 99-143; these read YRLVVFELENFQGRRAEFSGECSNLADRGFDRVRSIIVSA and GPWV…RPIK. The segment at 144–148 is connecting peptide; it reads MDAQE. Beta/gamma crystallin 'Greek key' domains are found at residues 149–190 and 191–233; these read HKIS…KVSS and GTWV…RRLR. The segment at 235-252 is C-terminal arm; the sequence is KQWHLEGSFPVLATEPPK.

The protein belongs to the beta/gamma-crystallin family. As to quaternary structure, homo/heterodimer, or complexes of higher-order. The structure of beta-crystallin oligomers seems to be stabilized through interactions between the N-terminal arms. Specific cleavages in the N-terminal arm occur during lens maturation and give rise to truncated forms, leading to impaired oligomerization and protein insolubilization.

Its function is as follows. Crystallins are the dominant structural components of the vertebrate eye lens. The polypeptide is Beta-crystallin B1 (CRYBB1) (Homo sapiens (Human)).